We begin with the raw amino-acid sequence, 343 residues long: Glyceraldehyde-3-phosphate dehydrogenase 1 (343 aa).

Residues 13-14 (RI), aspartate 35, arginine 79, and serine 121 contribute to the NAD(+) site. D-glyceraldehyde 3-phosphate-binding positions include 154 to 156 (SCT), threonine 185, 214 to 215 (TG), and arginine 237. Cysteine 155 acts as the Nucleophile in catalysis. Asparagine 319 contributes to the NAD(+) binding site.

The protein belongs to the glyceraldehyde-3-phosphate dehydrogenase family. In terms of assembly, homotetramer.

It is found in the cytoplasm. The catalysed reaction is D-glyceraldehyde 3-phosphate + phosphate + NAD(+) = (2R)-3-phospho-glyceroyl phosphate + NADH + H(+). Its pathway is carbohydrate degradation; glycolysis; pyruvate from D-glyceraldehyde 3-phosphate: step 1/5. Catalyzes the oxidative phosphorylation of glyceraldehyde 3-phosphate (G3P) to 1,3-bisphosphoglycerate (BPG) using the cofactor NAD. The first reaction step involves the formation of a hemiacetal intermediate between G3P and a cysteine residue, and this hemiacetal intermediate is then oxidized to a thioester, with concomitant reduction of NAD to NADH. The reduced NADH is then exchanged with the second NAD, and the thioester is attacked by a nucleophilic inorganic phosphate to produce BPG. The protein is Glyceraldehyde-3-phosphate dehydrogenase 1 (gap1) of Trichormus variabilis (strain ATCC 29413 / PCC 7937) (Anabaena variabilis).